A 128-amino-acid polypeptide reads, in one-letter code: Small ribosomal subunit protein uS11 (128 aa).

It belongs to the universal ribosomal protein uS11 family. Part of the 30S ribosomal subunit. Interacts with proteins S7 and S18. Binds to IF-3.

Located on the platform of the 30S subunit, it bridges several disparate RNA helices of the 16S rRNA. Forms part of the Shine-Dalgarno cleft in the 70S ribosome. In Methylococcus capsulatus (strain ATCC 33009 / NCIMB 11132 / Bath), this protein is Small ribosomal subunit protein uS11.